A 393-amino-acid chain; its full sequence is Putative mitogen-activated protein kinase kinase kinase 7-like (393 aa).

Residues 11 to 266 (KLSEKFLGAG…PSMKEIEKFL (256 aa)) form the Protein kinase domain. ATP is bound by residues 17–25 (LGAGSGGAV) and lysine 38. Catalysis depends on aspartate 133, which acts as the Proton acceptor. The disordered stretch occupies residues 339-379 (AAADGDREVRRAEKDTERETSRAAHNGERETRRAGQDVGRE).

Belongs to the protein kinase superfamily. STE Ser/Thr protein kinase family. MAP kinase kinase kinase subfamily. Mg(2+) is required as a cofactor.

The enzyme catalyses L-seryl-[protein] + ATP = O-phospho-L-seryl-[protein] + ADP + H(+). The catalysed reaction is L-threonyl-[protein] + ATP = O-phospho-L-threonyl-[protein] + ADP + H(+). This chain is Putative mitogen-activated protein kinase kinase kinase 7-like (Takl1), found in Drosophila melanogaster (Fruit fly).